The following is a 632-amino-acid chain: MAU2 chromatid cohesion factor homolog (632 aa).

TPR repeat units follow at residues 453 to 486 (GGFYYVQGLHAFHKNSFHEAKRFLRETLKMANAE) and 493 to 526 (SCSLVLLSHVFLSIGNSKESMNMVTPAMQLASKI).

The protein belongs to the SCC4/mau-2 family. In terms of assembly, interacts with Nipped-B to form the cohesin loading complex.

Its subcellular location is the nucleus. It is found in the nucleoplasm. Its function is as follows. Required for association of the cohesin complex with chromatin during interphase. Plays a role in sister chromatid cohesion and normal progression through prometaphase. The polypeptide is MAU2 chromatid cohesion factor homolog (Drosophila melanogaster (Fruit fly)).